Consider the following 344-residue polypeptide: Dihydroorotase (344 aa).

Residues H13 and H15 each contribute to the Zn(2+) site. Substrate-binding positions include 15–17 and N41; that span reads HFR. Residues K98, H135, and H173 each contribute to the Zn(2+) site. K98 is modified (N6-carboxylysine). H135 serves as a coordination point for substrate. Position 218 (L218) interacts with substrate. Residue D246 coordinates Zn(2+). Residue D246 is part of the active site. Residues H250 and A262 each contribute to the substrate site.

The protein belongs to the metallo-dependent hydrolases superfamily. DHOase family. Class II DHOase subfamily. In terms of assembly, homodimer. The cofactor is Zn(2+).

It catalyses the reaction (S)-dihydroorotate + H2O = N-carbamoyl-L-aspartate + H(+). It participates in pyrimidine metabolism; UMP biosynthesis via de novo pathway; (S)-dihydroorotate from bicarbonate: step 3/3. Catalyzes the reversible cyclization of carbamoyl aspartate to dihydroorotate. In Shewanella woodyi (strain ATCC 51908 / MS32), this protein is Dihydroorotase.